The chain runs to 94 residues: uncharacterized protein (94 aa).

An N-terminal signal peptide occupies residues 1–25 (MRAAIAVLFIALVGLATYHLVMSQA).

This is an uncharacterized protein from Archaeoglobus fulgidus (strain ATCC 49558 / DSM 4304 / JCM 9628 / NBRC 100126 / VC-16).